Here is a 360-residue protein sequence, read N- to C-terminus: Probable dual-specificity RNA methyltransferase RlmN (360 aa).

Catalysis depends on Glu-91, which acts as the Proton acceptor. One can recognise a Radical SAM core domain in the interval 97–335 (QHYGQSVCVT…CVVRQEHGTD (239 aa)). A disulfide bridge connects residues Cys-104 and Cys-340. Positions 111, 115, and 118 each coordinate [4Fe-4S] cluster. Residues 163–164 (GE), Ser-195, 218–220 (SLH), and Asn-296 each bind S-adenosyl-L-methionine. Cys-340 acts as the S-methylcysteine intermediate in catalysis.

Belongs to the radical SAM superfamily. RlmN family. [4Fe-4S] cluster serves as cofactor.

It localises to the cytoplasm. The enzyme catalyses adenosine(2503) in 23S rRNA + 2 reduced [2Fe-2S]-[ferredoxin] + 2 S-adenosyl-L-methionine = 2-methyladenosine(2503) in 23S rRNA + 5'-deoxyadenosine + L-methionine + 2 oxidized [2Fe-2S]-[ferredoxin] + S-adenosyl-L-homocysteine. The catalysed reaction is adenosine(37) in tRNA + 2 reduced [2Fe-2S]-[ferredoxin] + 2 S-adenosyl-L-methionine = 2-methyladenosine(37) in tRNA + 5'-deoxyadenosine + L-methionine + 2 oxidized [2Fe-2S]-[ferredoxin] + S-adenosyl-L-homocysteine. Specifically methylates position 2 of adenine 2503 in 23S rRNA and position 2 of adenine 37 in tRNAs. The sequence is that of Probable dual-specificity RNA methyltransferase RlmN from Streptococcus equi subsp. equi (strain 4047).